The sequence spans 261 residues: Carbonic anhydrase 1 (261 aa).

Position 2 is an N-acetylalanine (A2). An Alpha-carbonic anhydrase domain is found at 4-261 (PDWGYDGENG…LNGRTVKASF (258 aa)). The active-site Proton donor/acceptor is H65. The Zn(2+) site is built by H95, H97, and H120. Substrate-binding positions include T200 and 200 to 201 (TH).

The protein belongs to the alpha-carbonic anhydrase family. Zn(2+) is required as a cofactor.

It localises to the cytoplasm. It carries out the reaction hydrogencarbonate + H(+) = CO2 + H2O. The catalysed reaction is urea = cyanamide + H2O. Its activity is regulated as follows. Inhibited by acetazolamide. Its function is as follows. Catalyzes the reversible hydration of carbon dioxide. Can hydrate cyanamide to urea. The chain is Carbonic anhydrase 1 (CA1) from Bos taurus (Bovine).